A 449-amino-acid polypeptide reads, in one-letter code: UDP-N-acetylmuramoylalanine--D-glutamate ligase (449 aa).

119–125 contacts ATP; the sequence is GSNGKTT.

It belongs to the MurCDEF family.

The protein resides in the cytoplasm. It catalyses the reaction UDP-N-acetyl-alpha-D-muramoyl-L-alanine + D-glutamate + ATP = UDP-N-acetyl-alpha-D-muramoyl-L-alanyl-D-glutamate + ADP + phosphate + H(+). The protein operates within cell wall biogenesis; peptidoglycan biosynthesis. Its function is as follows. Cell wall formation. Catalyzes the addition of glutamate to the nucleotide precursor UDP-N-acetylmuramoyl-L-alanine (UMA). This Streptococcus suis (strain 98HAH33) protein is UDP-N-acetylmuramoylalanine--D-glutamate ligase.